The primary structure comprises 417 residues: Equilibrative nucleotide transporter 7 (417 aa).

A run of 11 helical transmembrane segments spans residues Leu19 to Thr39, Val54 to Glu74, Ile84 to Ser104, Val110 to Val130, Pro143 to Leu163, Leu184 to Phe204, Leu264 to Tyr284, Gly293 to Pro315, Lys326 to Ala346, Trp353 to Phe373, and Met392 to Ile412.

The protein belongs to the SLC29A/ENT transporter (TC 2.A.57) family. As to expression, expressed in leaves and flowers.

The protein localises to the cell membrane. Its function is as follows. Nucleoside transporter that can mediate uptake of adenosine, uridine, guanosine or cytidine when expressed in a heterologous system (yeast). This chain is Equilibrative nucleotide transporter 7 (ENT7), found in Arabidopsis thaliana (Mouse-ear cress).